Consider the following 218-residue polypeptide: N-(5'-phosphoribosyl)anthranilate isomerase (218 aa).

This sequence belongs to the TrpF family.

It catalyses the reaction N-(5-phospho-beta-D-ribosyl)anthranilate = 1-(2-carboxyphenylamino)-1-deoxy-D-ribulose 5-phosphate. The protein operates within amino-acid biosynthesis; L-tryptophan biosynthesis; L-tryptophan from chorismate: step 3/5. In Bordetella bronchiseptica (strain ATCC BAA-588 / NCTC 13252 / RB50) (Alcaligenes bronchisepticus), this protein is N-(5'-phosphoribosyl)anthranilate isomerase.